The following is a 459-amino-acid chain: Inositol-trisphosphate 3-kinase A (459 aa).

The tract at residues 1–26 (MTLPGHPTGMARPRGAGPCSPGLERA) is disordered. Residues arginine 35, arginine 55, and arginine 62 each carry the omega-N-methylarginine modification. Residues 49 to 164 (AAAGEPRARG…TSEDVGQKSH (116 aa)) are disordered. A compositionally biased stretch (low complexity) spans 116–132 (RRLSTSSLSSTGSSSLL). Phosphoserine occurs at positions 135 and 195. ATP is bound by residues serine 195, lysine 207, 247-249 (QDL), and aspartate 260. 2 residues coordinate substrate: lysine 262 and arginine 283. Residues 285–293 (DMYKKMLAV) form a calmodulin-binding region. 310–317 (KPRYMQWR) contacts substrate. ATP is bound by residues lysine 334 and aspartate 414. Lysine 417 lines the substrate pocket.

It belongs to the inositol phosphokinase (IPK) family.

It localises to the cytoplasm. Its subcellular location is the cytoskeleton. It catalyses the reaction 1D-myo-inositol 1,4,5-trisphosphate + ATP = 1D-myo-inositol 1,3,4,5-tetrakisphosphate + ADP + H(+). With respect to regulation, activated by calcium/calmodulin. Its function is as follows. Catalyzes the phosphorylation of 1D-myo-inositol 1,4,5-trisphosphate (InsP3) into 1D-myo-inositol 1,3,4,5-tetrakisphosphate and participates to the regulation of calcium homeostasis. This is Inositol-trisphosphate 3-kinase A from Rattus norvegicus (Rat).